We begin with the raw amino-acid sequence, 126 residues long: Small ribosomal subunit protein uS8 (126 aa).

Belongs to the universal ribosomal protein uS8 family. In terms of assembly, part of the 30S ribosomal subunit. Contacts proteins S5 and S12.

Its function is as follows. One of the primary rRNA binding proteins, it binds directly to 16S rRNA central domain where it helps coordinate assembly of the platform of the 30S subunit. In Lawsonia intracellularis (strain PHE/MN1-00), this protein is Small ribosomal subunit protein uS8.